A 173-amino-acid chain; its full sequence is Soluble secreted antigen MPT53 (173 aa).

An N-terminal signal peptide occupies residues 1–38; sequence MSLRLVSPIKAFADGIVAVAIAVVLMFGLANTPRAVAA. An intrachain disulfide couples Cys-73 to Cys-76.

This sequence belongs to the thioredoxin family.

Its subcellular location is the secreted. Disulfide oxidoreductase that catalyzes the oxidation of reduced, unfolded secreted proteins to form disulfide bonds. Despite a weak homology to thioredoxin this cannot serve as a substrate for thioredoxin reductase. This Mycobacterium bovis (strain ATCC BAA-935 / AF2122/97) protein is Soluble secreted antigen MPT53 (mpt53).